The primary structure comprises 245 residues: Type I iodothyronine deiodinase (245 aa).

The Extracellular segment spans residues 1-9; sequence LSIRVLLHK. Residues 10 to 30 traverse the membrane as a helical; Signal-anchor for type III membrane protein segment; that stretch reads LLILLQVTLSVVVGKTMMILF. The Cytoplasmic segment spans residues 31-245; it reads PDTTKRYILK…EIRAVLEKLK (215 aa). Residue selenocysteine 123 is part of the active site. Selenocysteine 123 is a non-standard amino acid (selenocysteine).

The protein belongs to the iodothyronine deiodinase family. As to quaternary structure, predominantly monomer. Can form homodimers but homodimerization is not essential for enzyme activity.

It localises to the cell membrane. The protein resides in the endoplasmic reticulum membrane. The protein localises to the basolateral cell membrane. The catalysed reaction is 3,3',5-triiodo-L-thyronine + iodide + A + H(+) = L-thyroxine + AH2. It carries out the reaction 3,3',5'-triiodo-L-thyronine + iodide + A + H(+) = L-thyroxine + AH2. It catalyses the reaction 3,3'-diiodo-L-thyronine + iodide + A + H(+) = 3,3',5'-triiodo-L-thyronine + AH2. The enzyme catalyses 3,3'-diiodo-L-thyronine + iodide + A + H(+) = 3,3',5-triiodo-L-thyronine + AH2. The catalysed reaction is 3'-iodo-L-thyronine + iodide + A + H(+) = 3',5'-diiodo-L-thyronine + AH2. It carries out the reaction 3-iodo-L-thyronine + iodide + A + H(+) = 3,5-diiodo-L-thyronine + AH2. It catalyses the reaction 3-iodo-L-thyronine + iodide + A + H(+) = 3,3'-diiodo-L-thyronine + AH2. The enzyme catalyses 3,3'-diiodothyronamine + iodide + A + H(+) = 3,3',5'-triiodothyronamine + AH2. The catalysed reaction is 3'-iodothyronamine + iodide + A + H(+) = 3',5'-diiodothyronamine + AH2. It carries out the reaction 3-iodothyronamine + iodide + A + H(+) = 3,3'-diiodothyronamine + AH2. It catalyses the reaction 3,3'-diiodothyronamine + iodide + A + H(+) = 3,3',5-triiodothyronamine + AH2. The enzyme catalyses 3-iodothyronamine + iodide + A + H(+) = 3,5-diiodothyronamine + AH2. The catalysed reaction is 3,3'-diiodo-L-thyronine sulfate + iodide + A + H(+) = 3,3',5'-triiodo-L-thyronine sulfate + AH2. It carries out the reaction 3,3',5'-triiodo-L-thyronine sulfate + iodide + A + H(+) = L-thyroxine sulfate + AH2. It catalyses the reaction 3,3'-diiodo-L-thyronine sulfate + iodide + A + H(+) = 3,3',5-triiodo-L-thyronine sulfate + AH2. In terms of biological role, plays a crucial role in the metabolism of thyroid hormones (TH) and has specific roles in TH activation and inactivation by deiodination. Catalyzes the deiodiantion of L-thyroxine (T4) to 3,5,3'-triiodothyronine (T3) and 3,3',5'-triiodothyronine (rT3) to 3,3'-diiodothyronine (3,3'-T2) via outer-ring deiodination (ORD). Catalyzes the deiodiantion of T4 to rT3, T3 to 3,3'-T2, 3,5-diiodothyronine (3,5-T2) to 3-monoiodothyronine (3-T1) and 3,3'-T2 to 3-T1 via inner-ring deiodination (IRD). Catalyzes the deiodiantion of 3',5'-diiodothyronine (3',5'-T2) to 3'-monoiodothyronine (3'-T1) via ORD. Catalyzes the phenolic ring deiodinations of 3,3',5'-triiodothyronamine, 3',5'-diiodothyronamine and 3,3'-diiodothyronamine as well as tyrosyl ring deiodinations of 3,5,3'-triiodothyronamine and 3,5-diiodothyronamine. Catalyzes the deiodination of L-thyroxine sulfate and 3,3',5-triiodo-L-thyronine sulfate via IRD and of 3,3',5'-triiodo-L-thyronine sulfate via ORD. In Gallus gallus (Chicken), this protein is Type I iodothyronine deiodinase (DIO1).